Here is a 100-residue protein sequence, read N- to C-terminus: Large ribosomal subunit protein uL23 (100 aa).

The protein belongs to the universal ribosomal protein uL23 family. Part of the 50S ribosomal subunit. Contacts protein L29, and trigger factor when it is bound to the ribosome.

Functionally, one of the early assembly proteins it binds 23S rRNA. One of the proteins that surrounds the polypeptide exit tunnel on the outside of the ribosome. Forms the main docking site for trigger factor binding to the ribosome. This chain is Large ribosomal subunit protein uL23, found in Mycobacteroides abscessus (strain ATCC 19977 / DSM 44196 / CCUG 20993 / CIP 104536 / JCM 13569 / NCTC 13031 / TMC 1543 / L948) (Mycobacterium abscessus).